A 170-amino-acid chain; its full sequence is N-alpha-acetyltransferase 50 (170 aa).

An N-acetyltransferase domain is found at 6–155 (IELGDVTPHN…DAHVLQKNLK (150 aa)). Residue tyrosine 31 participates in substrate binding. Tyrosine 73 is an active-site residue. Methionine 75 contributes to the substrate binding site. Residue 77-90 (LGCLAPYRRLGIGT) coordinates acetyl-CoA. A CoA-binding site is contributed by 79-90 (CLAPYRRLGIGT). Histidine 112 is a catalytic residue. 117 to 126 (NESAIDFYRK) contributes to the CoA binding site. The interval 138–141 (YYKR) is substrate.

The protein belongs to the acetyltransferase family. GNAT subfamily.

It localises to the cytoplasm. The protein localises to the nucleus. The enzyme catalyses N-terminal L-methionyl-L-alanyl-[protein] + acetyl-CoA = N-terminal N(alpha)-acetyl-L-methionyl-L-alanyl-[protein] + CoA + H(+). The catalysed reaction is N-terminal L-methionyl-L-seryl-[protein] + acetyl-CoA = N-terminal N(alpha)-acetyl-L-methionyl-L-seryl-[protein] + CoA + H(+). It catalyses the reaction N-terminal L-methionyl-L-valyl-[protein] + acetyl-CoA = N-terminal N(alpha)-acetyl-L-methionyl-L-valyl-[protein] + CoA + H(+). It carries out the reaction N-terminal L-methionyl-L-threonyl-[protein] + acetyl-CoA = N-terminal N(alpha)-acetyl-L-methionyl-L-threonyl-[protein] + CoA + H(+). The enzyme catalyses N-terminal L-methionyl-L-lysyl-[protein] + acetyl-CoA = N-terminal N(alpha)-acetyl-L-methionyl-L-lysyl-[protein] + CoA + H(+). The catalysed reaction is N-terminal L-methionyl-L-leucyl-[protein] + acetyl-CoA = N-terminal N(alpha)-acetyl-L-methionyl-L-leucyl-[protein] + CoA + H(+). It catalyses the reaction N-terminal L-methionyl-L-phenylalanyl-[protein] + acetyl-CoA = N-terminal N(alpha)-acetyl-L-methionyl-L-phenylalanyl-[protein] + CoA + H(+). It carries out the reaction N-terminal L-methionyl-L-tyrosyl-[protein] + acetyl-CoA = N-terminal N(alpha)-acetyl-L-methionyl-L-tyrosyl-[protein] + CoA + H(+). Functionally, N-alpha-acetyltransferase that acetylates the N-terminus of proteins that retain their initiating methionine. Has a broad substrate specificity: able to acetylate the initiator methionine of most peptides, except for those with a proline in second position. Also displays N-epsilon-acetyltransferase activity by mediating acetylation of the side chain of specific lysines on proteins. The relevance of N-epsilon-acetyltransferase activity is however unclear. Required for sister chromatid cohesion during mitosis by promoting binding of CDCA5/sororin to cohesin. In Xenopus laevis (African clawed frog), this protein is N-alpha-acetyltransferase 50 (naa50).